We begin with the raw amino-acid sequence, 261 residues long: Methyl jasmonate esterase 1 (261 aa).

The 244-residue stretch at 8–251 (FVLVHGACHG…MFSKPLDLCA (244 aa)) folds into the AB hydrolase-1 domain. Residue S82 is the Acyl-ester intermediate of the active site. Residues D211 and H239 each act as charge relay system in the active site.

Belongs to the AB hydrolase superfamily. Methylesterase family. In terms of assembly, homodimer.

The catalysed reaction is methyl (-)-jasmonate + H2O = jasmonate + methanol + H(+). The enzyme catalyses methyl salicylate + H2O = salicylate + methanol + H(+). The protein operates within plant hormone biosynthesis. It functions in the pathway lipid metabolism; oxylipin biosynthesis. Methylesterase that catalyzes the hydrolysis of methyl jasmonate (MeJA) into jasmonate (JA). Can also use methyl salicylate (MeSA) as substrate with a lower efficiency. The chain is Methyl jasmonate esterase 1 from Vitis vinifera (Grape).